The following is a 295-amino-acid chain: MREVVELYKRIGGFQALHVAQAYEVLKEALGEADVRFFSFTGNLVATGLREIIAEALRERLFNVVVTTAGALDHDIAKAMGASYRPGSFDLDDYELAEKGLHRLGNVVISREEYGPYVEKFVLQRCERLWGRSLATYELAEEFGRDLPEDSILGAAARAGVKVFVPGIVDGAVGTALLTCNDLARVRRGGARLVVDVLKDEEALREIVHGGKRLAALIVGGGISKHHVIWWAQFKGGLDYVVYISTAVEYDGSLSGARPREAVSWGKVKPTAKSVYVYADATLVLPILLKALCGK.

Lys-267 functions as the Nucleophile in the catalytic mechanism.

It belongs to the deoxyhypusine synthase family. The cofactor is NAD(+).

The enzyme catalyses [eIF5A protein]-L-lysine + spermidine = [eIF5A protein]-deoxyhypusine + propane-1,3-diamine. Its pathway is protein modification; eIF5A hypusination. Catalyzes the NAD-dependent oxidative cleavage of spermidine and the subsequent transfer of the butylamine moiety of spermidine to the epsilon-amino group of a specific lysine residue of the eIF-5A precursor protein to form the intermediate deoxyhypusine residue. This chain is Probable deoxyhypusine synthase, found in Pyrobaculum calidifontis (strain DSM 21063 / JCM 11548 / VA1).